The sequence spans 495 residues: Siroheme synthase 2 (495 aa).

Residues Met1 to Met205 form a precorrin-2 dehydrogenase /sirohydrochlorin ferrochelatase region. Residues Glu22–Thr23 and Pro43–Asp44 contribute to the NAD(+) site. Ser130 carries the phosphoserine modification. Residues Gly220–Ala495 form a uroporphyrinogen-III C-methyltransferase region. Pro229 contacts S-adenosyl-L-methionine. The active-site Proton acceptor is the Asp252. Lys274 (proton donor) is an active-site residue. S-adenosyl-L-methionine-binding positions include Gly305–Asp307, Ile310, Thr335–Ala336, Met387, and Ala416. The disordered stretch occupies residues Phe471–Ala495.

The protein in the N-terminal section; belongs to the precorrin-2 dehydrogenase / sirohydrochlorin ferrochelatase family. In the C-terminal section; belongs to the precorrin methyltransferase family.

The enzyme catalyses uroporphyrinogen III + 2 S-adenosyl-L-methionine = precorrin-2 + 2 S-adenosyl-L-homocysteine + H(+). The catalysed reaction is precorrin-2 + NAD(+) = sirohydrochlorin + NADH + 2 H(+). It catalyses the reaction siroheme + 2 H(+) = sirohydrochlorin + Fe(2+). Its pathway is cofactor biosynthesis; adenosylcobalamin biosynthesis; precorrin-2 from uroporphyrinogen III: step 1/1. It participates in cofactor biosynthesis; adenosylcobalamin biosynthesis; sirohydrochlorin from precorrin-2: step 1/1. The protein operates within porphyrin-containing compound metabolism; siroheme biosynthesis; precorrin-2 from uroporphyrinogen III: step 1/1. It functions in the pathway porphyrin-containing compound metabolism; siroheme biosynthesis; siroheme from sirohydrochlorin: step 1/1. Its pathway is porphyrin-containing compound metabolism; siroheme biosynthesis; sirohydrochlorin from precorrin-2: step 1/1. Its function is as follows. Multifunctional enzyme that catalyzes the SAM-dependent methylations of uroporphyrinogen III at position C-2 and C-7 to form precorrin-2 via precorrin-1. Then it catalyzes the NAD-dependent ring dehydrogenation of precorrin-2 to yield sirohydrochlorin. Finally, it catalyzes the ferrochelation of sirohydrochlorin to yield siroheme. This is Siroheme synthase 2 from Halorhodospira halophila (strain DSM 244 / SL1) (Ectothiorhodospira halophila (strain DSM 244 / SL1)).